The primary structure comprises 192 residues: Epididymal-specific lipocalin-5 (192 aa).

Residues 1-26 (MCSVARHMESIMLFTLLGLCVGLAAG) form the signal peptide. Residues cysteine 89 and cysteine 183 are joined by a disulfide bond.

It belongs to the calycin superfamily. Lipocalin family. 2 different forms with differently processed N-termini exist. Epididymal fluid of the caudal and corpus regions (at protein level).

Its subcellular location is the secreted. Its function is as follows. Associates with spermatozoa in the epididymal fluid but does not bind tightly to them. Binds both all-trans and 13-cis retinoic acid. May act as a retinoid carrier protein which is required for epididymal function and/or sperm maturation. The protein is Epididymal-specific lipocalin-5 of Mus musculus (Mouse).